The sequence spans 251 residues: Triosephosphate isomerase 1 (251 aa).

9 to 11 (NWK) contributes to the substrate binding site. The active-site Electrophile is the H95. The Proton acceptor role is filled by E167. Substrate contacts are provided by residues G173, S213, and 234–235 (GG).

This sequence belongs to the triosephosphate isomerase family. Homodimer.

It is found in the cytoplasm. It catalyses the reaction D-glyceraldehyde 3-phosphate = dihydroxyacetone phosphate. The protein operates within carbohydrate biosynthesis; gluconeogenesis. Its pathway is carbohydrate degradation; glycolysis; D-glyceraldehyde 3-phosphate from glycerone phosphate: step 1/1. Involved in the gluconeogenesis. Catalyzes stereospecifically the conversion of dihydroxyacetone phosphate (DHAP) to D-glyceraldehyde-3-phosphate (G3P). The protein is Triosephosphate isomerase 1 of Listeria monocytogenes serovar 1/2a (strain ATCC BAA-679 / EGD-e).